Here is a 296-residue protein sequence, read N- to C-terminus: Putative methyltransferase HI_1523 (296 aa).

This sequence belongs to the N(4)/N(6)-methyltransferase family.

The sequence is that of Putative methyltransferase HI_1523 from Haemophilus influenzae (strain ATCC 51907 / DSM 11121 / KW20 / Rd).